Reading from the N-terminus, the 271-residue chain is 4-hydroxy-tetrahydrodipicolinate reductase (271 aa).

NAD(+) is bound by residues 11 to 16 (GGSGRM) and Glu-37. Arg-38 is an NADP(+) binding site. NAD(+) is bound by residues 101-103 (GTT) and 125-128 (APNM). The active-site Proton donor/acceptor is His-158. (S)-2,3,4,5-tetrahydrodipicolinate is bound at residue His-159. Lys-162 (proton donor) is an active-site residue. 168 to 169 (GT) is a binding site for (S)-2,3,4,5-tetrahydrodipicolinate.

The protein belongs to the DapB family.

Its subcellular location is the cytoplasm. The enzyme catalyses (S)-2,3,4,5-tetrahydrodipicolinate + NAD(+) + H2O = (2S,4S)-4-hydroxy-2,3,4,5-tetrahydrodipicolinate + NADH + H(+). The catalysed reaction is (S)-2,3,4,5-tetrahydrodipicolinate + NADP(+) + H2O = (2S,4S)-4-hydroxy-2,3,4,5-tetrahydrodipicolinate + NADPH + H(+). It participates in amino-acid biosynthesis; L-lysine biosynthesis via DAP pathway; (S)-tetrahydrodipicolinate from L-aspartate: step 4/4. Catalyzes the conversion of 4-hydroxy-tetrahydrodipicolinate (HTPA) to tetrahydrodipicolinate. The protein is 4-hydroxy-tetrahydrodipicolinate reductase of Shewanella halifaxensis (strain HAW-EB4).